Reading from the N-terminus, the 365-residue chain is Probable dual-specificity RNA methyltransferase RlmN (365 aa).

The Proton acceptor role is filled by Glu108. Residues 114 to 352 (YPDRNTVCIS…SCTVRDTRGR (239 aa)) form the Radical SAM core domain. Cysteines 121 and 358 form a disulfide. [4Fe-4S] cluster is bound by residues Cys128, Cys132, and Cys135. Residues 179-180 (GE), Ser213, 236-238 (SLH), and Asn315 each bind S-adenosyl-L-methionine. Cys358 functions as the S-methylcysteine intermediate in the catalytic mechanism.

The protein belongs to the radical SAM superfamily. RlmN family. Requires [4Fe-4S] cluster as cofactor.

The protein localises to the cytoplasm. It carries out the reaction adenosine(2503) in 23S rRNA + 2 reduced [2Fe-2S]-[ferredoxin] + 2 S-adenosyl-L-methionine = 2-methyladenosine(2503) in 23S rRNA + 5'-deoxyadenosine + L-methionine + 2 oxidized [2Fe-2S]-[ferredoxin] + S-adenosyl-L-homocysteine. It catalyses the reaction adenosine(37) in tRNA + 2 reduced [2Fe-2S]-[ferredoxin] + 2 S-adenosyl-L-methionine = 2-methyladenosine(37) in tRNA + 5'-deoxyadenosine + L-methionine + 2 oxidized [2Fe-2S]-[ferredoxin] + S-adenosyl-L-homocysteine. Its function is as follows. Specifically methylates position 2 of adenine 2503 in 23S rRNA and position 2 of adenine 37 in tRNAs. The sequence is that of Probable dual-specificity RNA methyltransferase RlmN from Mycolicibacterium gilvum (strain PYR-GCK) (Mycobacterium gilvum (strain PYR-GCK)).